Here is a 395-residue protein sequence, read N- to C-terminus: Acetate kinase (395 aa).

Asparagine 7 is a Mg(2+) binding site. Lysine 14 is an ATP binding site. Arginine 90 contributes to the substrate binding site. Aspartate 147 functions as the Proton donor/acceptor in the catalytic mechanism. ATP is bound by residues histidine 207 to glycine 211, aspartate 282 to arginine 284, and glycine 330 to asparagine 334. A Mg(2+)-binding site is contributed by glutamate 383.

Belongs to the acetokinase family. As to quaternary structure, homodimer. The cofactor is Mg(2+). It depends on Mn(2+) as a cofactor.

It is found in the cytoplasm. The enzyme catalyses acetate + ATP = acetyl phosphate + ADP. It functions in the pathway metabolic intermediate biosynthesis; acetyl-CoA biosynthesis; acetyl-CoA from acetate: step 1/2. Catalyzes the formation of acetyl phosphate from acetate and ATP. Can also catalyze the reverse reaction. In Lachnoclostridium phytofermentans (strain ATCC 700394 / DSM 18823 / ISDg) (Clostridium phytofermentans), this protein is Acetate kinase.